The primary structure comprises 496 residues: Lysine--tRNA ligase (496 aa).

Residues Glu403 and Glu410 each contribute to the Mg(2+) site.

It belongs to the class-II aminoacyl-tRNA synthetase family. As to quaternary structure, homodimer. Mg(2+) is required as a cofactor.

The protein resides in the cytoplasm. It carries out the reaction tRNA(Lys) + L-lysine + ATP = L-lysyl-tRNA(Lys) + AMP + diphosphate. In Aster yellows witches'-broom phytoplasma (strain AYWB), this protein is Lysine--tRNA ligase.